The primary structure comprises 287 residues: Light-independent protochlorophyllide reductase iron-sulfur ATP-binding protein (287 aa).

ATP contacts are provided by residues 10-15 and lysine 39; that span reads GIGKST. Serine 14 lines the Mg(2+) pocket. Residues cysteine 95 and cysteine 129 each contribute to the [4Fe-4S] cluster site. 180–181 serves as a coordination point for ATP; that stretch reads NR.

It belongs to the NifH/BchL/ChlL family. As to quaternary structure, homodimer. Protochlorophyllide reductase is composed of three subunits; ChlL, ChlN and ChlB. Requires [4Fe-4S] cluster as cofactor.

The protein resides in the plastid. The protein localises to the chloroplast. It carries out the reaction chlorophyllide a + oxidized 2[4Fe-4S]-[ferredoxin] + 2 ADP + 2 phosphate = protochlorophyllide a + reduced 2[4Fe-4S]-[ferredoxin] + 2 ATP + 2 H2O. Its pathway is porphyrin-containing compound metabolism; chlorophyll biosynthesis (light-independent). In terms of biological role, component of the dark-operative protochlorophyllide reductase (DPOR) that uses Mg-ATP and reduced ferredoxin to reduce ring D of protochlorophyllide (Pchlide) to form chlorophyllide a (Chlide). This reaction is light-independent. The L component serves as a unique electron donor to the NB-component of the complex, and binds Mg-ATP. This chain is Light-independent protochlorophyllide reductase iron-sulfur ATP-binding protein, found in Nephroselmis olivacea (Green alga).